The sequence spans 489 residues: MITIPYLTAVSTYFSYGLLFAFGQLRDFFRRFIDWWFTSNLQGYAPICLGHEDFYIRRLYHRIQDCFERPISSAPDAWFDVVERYSNDNNKTLKRTTKTSRCLNLGSYNYLGFGSFDEYCTPRVIESLKKFSASTCSSRVDAGTTSVHAELEECVTRFVGKPAAVVFGMGYATNSAIIPVLIGKGGLIISDSLNHSSIVNGARGSGATIRVFQHNTPSHLERVLREQIAEGQPRTHRPWKKIIVVVEGIYSMEGEICHLPEVVAICKKYKAYVYLDEAHSIGAIGKTGKGICELLGVDTADVDVMMGTFTKSFGSCGGYIAGSKELIQYLKHQCPAHLYATSIPTPSAQQIISAIKVILGEDGSNRGAQKLARIRENSNFFRAELQKMGFEVLGDNDSPVMPIMLYNPAKIPAFSRECLRQKVAVVVVGFPATPLLLARARICISASHSREDLIRALKVISKVGDLSGIKYFPAEPKKIEQSKNDIKLD.

The helical transmembrane segment at 2 to 22 (ITIPYLTAVSTYFSYGLLFAF) threads the bilayer. N6-(pyridoxal phosphate)lysine is present on Lys311.

It belongs to the class-II pyridoxal-phosphate-dependent aminotransferase family. As to quaternary structure, heterodimer with LCB1. Component of the serine palmitoyltransferase (SPT) complex, composed of LCB1 and LCB2 (LCB2a or LCB2b). It depends on pyridoxal 5'-phosphate as a cofactor. Ubiquitous. Detected in leaves, roots, stems, flowers and at a lower level in mature seeds.

It is found in the endoplasmic reticulum membrane. It carries out the reaction L-serine + hexadecanoyl-CoA + H(+) = 3-oxosphinganine + CO2 + CoA. The protein operates within lipid metabolism; sphingolipid metabolism. Serine palmitoyltransferase (SPT). The heterodimer formed with LCB1 constitutes the catalytic core. Involved in the regulation of the programmed cell death (PCD) signaling pathway. Plays an important role during male gametogenesis and embryogenesis. In Arabidopsis thaliana (Mouse-ear cress), this protein is Long chain base biosynthesis protein 2a (LCB2a).